We begin with the raw amino-acid sequence, 351 residues long: MMEAEEQPWKTTFYSKLPKVELHAHLNGSISSNTIRKLIAKKPDLKIHDQMTMIDKGEKRTLEECLQMFQIIHLLTTTPEDVLMVTKDVIKEFADDGVKYLELRSTPRGEDATGMTKKTYVESILEGIKQSKEENVDIDVRYLISIDRRGGSSAAKEAVKLAEEFFLSAEDTVLGLDLSGDPSAGQAKDFLEPLLEAKKSGLKLALHLSEIPNQKTETQVLLNLFPDRIGHGTFLSSSEEGSPDLVDFVRQHQIPLELCLTSNVKSQTVPAYDQHHFGFWYSVAHPAVICTDDKGVFATRLSQEYQLVAETFHLTQSQVWDLSYESISYIFASDSTKADLRKKWSHLKPHF.

Residues histidine 23 and histidine 25 each coordinate Zn(2+). N(6)-methyl-AMP-binding positions include histidine 25, asparagine 27, histidine 73, 105–108 (STPR), aspartate 147, and glycine 180. Residue histidine 207 participates in Zn(2+) binding. Residues glutamate 210, aspartate 292, and aspartate 293 each coordinate N(6)-methyl-AMP. Glutamate 210 (proton donor) is an active-site residue. Aspartate 292 provides a ligand contact to Zn(2+).

Belongs to the metallo-dependent hydrolases superfamily. Adenosine and AMP deaminases family. In terms of assembly, monomer. It depends on Zn(2+) as a cofactor.

It carries out the reaction N(6)-methyl-AMP + H2O + H(+) = IMP + methylamine. Its function is as follows. Catalyzes the hydrolysis of the free cytosolic methylated adenosine nucleotide N(6)-methyl-AMP (N6-mAMP) to produce inositol monophosphate (IMP) and methylamine. Is required for the catabolism of cytosolic N6-mAMP, which is derived from the degradation of mRNA containing N6-methylated adenine (m6A). This is N6-Methyl-AMP deaminase from Bos taurus (Bovine).